A 398-amino-acid chain; its full sequence is uncharacterized protein (398 aa).

One can recognise a BIG2 domain in the interval 240–306 (SLNKNIDQLI…SITVTTNDGS (67 aa)).

This is an uncharacterized protein from Clostridium acetobutylicum (strain ATCC 824 / DSM 792 / JCM 1419 / IAM 19013 / LMG 5710 / NBRC 13948 / NRRL B-527 / VKM B-1787 / 2291 / W).